We begin with the raw amino-acid sequence, 279 residues long: Pantothenate synthetase (279 aa).

Residue Met26–His33 coordinates ATP. The active-site Proton donor is the His33. Gln57 serves as a coordination point for (R)-pantoate. Residue Gln57 coordinates beta-alanine. Gly144 to Asp147 serves as a coordination point for ATP. Position 150 (Gln150) interacts with (R)-pantoate. ATP contacts are provided by residues Val173 and Leu181–Arg184.

This sequence belongs to the pantothenate synthetase family. Homodimer.

Its subcellular location is the cytoplasm. The catalysed reaction is (R)-pantoate + beta-alanine + ATP = (R)-pantothenate + AMP + diphosphate + H(+). It functions in the pathway cofactor biosynthesis; (R)-pantothenate biosynthesis; (R)-pantothenate from (R)-pantoate and beta-alanine: step 1/1. Its function is as follows. Catalyzes the condensation of pantoate with beta-alanine in an ATP-dependent reaction via a pantoyl-adenylate intermediate. The protein is Pantothenate synthetase of Burkholderia orbicola (strain MC0-3).